The primary structure comprises 332 residues: MSGQHQITEQPSGNPLSRTSTLIQEKPLTPTSSHAGTQKQPEAPRQPTFLIQLQNIRHAIRKPMAEFFGVALLIIFGAGSACQVVLSTNPDVASSARGSFLSINFGWAIGIAMGVWVSGGISGGHINPAITIAMATYRGFPWCKVPSYILAQVLGGVVGAALVYANYIHAIDVFEGGHHIRTEATASLFATYALPYMTQASCFFSEFLATAVLSMMVFALTDKRNHSPTNGLLPFALFILFVGLGASLGMETAYALNPARDFGPRLFLAMAGYGKALFNYRSQYWLWAPIIAPVLGAQAGGLLYDTFLNDGDNSPIKWRCASSQEQQLAEVV.

Polar residues predominate over residues 1 to 40 (MSGQHQITEQPSGNPLSRTSTLIQEKPLTPTSSHAGTQKQ). The segment at 1–46 (MSGQHQITEQPSGNPLSRTSTLIQEKPLTPTSSHAGTQKQPEAPRQ) is disordered. At 1 to 66 (MSGQHQITEQ…RHAIRKPMAE (66 aa)) the chain is on the cytoplasmic side. A helical transmembrane segment spans residues 67–87 (FFGVALLIIFGAGSACQVVLS). The Extracellular segment spans residues 88–100 (TNPDVASSARGSF). Residues 101–121 (LSINFGWAIGIAMGVWVSGGI) traverse the membrane as a helical segment. The Cytoplasmic portion of the chain corresponds to 122 to 144 (SGGHINPAITIAMATYRGFPWCK). An NPA 1 motif is present at residues 127 to 129 (NPA). Residues 145 to 165 (VPSYILAQVLGGVVGAALVYA) form a helical membrane-spanning segment. At 166 to 199 (NYIHAIDVFEGGHHIRTEATASLFATYALPYMTQ) the chain is on the extracellular side. A helical transmembrane segment spans residues 200–220 (ASCFFSEFLATAVLSMMVFAL). Over 221 to 230 (TDKRNHSPTN) the chain is Cytoplasmic. Residues 231–251 (GLLPFALFILFVGLGASLGME) form a helical membrane-spanning segment. Over 252 to 283 (TAYALNPARDFGPRLFLAMAGYGKALFNYRSQ) the chain is Extracellular. The short motif at 257–259 (NPA) is the NPA 2 element. Residues 284 to 304 (YWLWAPIIAPVLGAQAGGLLY) form a helical membrane-spanning segment. Residues 305–332 (DTFLNDGDNSPIKWRCASSQEQQLAEVV) are Cytoplasmic-facing.

It belongs to the MIP/aquaporin (TC 1.A.8) family.

The protein resides in the membrane. The enzyme catalyses H2O(in) = H2O(out). In terms of biological role, water channel required to facilitate the transport of water across membranes. Does not mediate the transport carbon dioxide across the membrane. This Laccaria bicolor (Bicoloured deceiver) protein is Aquaporin-7-2.